The chain runs to 591 residues: MKKYPKIGIRPTIDGRQGGVRESLEEKTMNLAKAVAELISNNLKNGDGSPVECIIADNTIGRVAESAACAEKFEREGVGSTITVTSCWCYGAETMDMNPHYPKAVWGFNGTERPGAVYLAAVLAGHAQKGLPAFGIYGRDVQDLDDNTIPEDVAEKILRFARAAQAVATMRGKSYLSMGSVSMGIAGSIVNPDFFQEYLGMRNESIDLTEIIRRMEEGIYDHEEYAKAMAWTEKYCKVNEGEDFKNRPEKRKKREQKDADWEFVVKMMIIMRDLMTGNPKLKEMGFKEEALGHNAIAAGFQGQRQWTDFYPNGDYPEALLNTSFDWNGIREAFVVATENDACNGVAMLFGHLLTNRAQIFSDVRTYWSPEAVKRVTGKELTGLAANGIIHLINSGATTLDGSGQSLDAEGNPVMKEPWNLTDADVENCLKATTWYPADRDYFRGGGFSSNFLSKGGMPVTMMRLNLIKGLGPVLQIAEGWTVEIDPEIHQKLNMRTDPTWPTTWFVPRLCDKSAFKDVYSVMNNWGANHGAISYGHIGQDLITLASMLRIPVCMHNVDENEIFRPTAWNAFGMDKEGADYRACTTYGPIYK.

Active-site proton acceptor residues include Glu-338 and Asp-362. 3 residues coordinate Mn(2+): Glu-338, Asp-362, and His-529.

The protein belongs to the L-fucose isomerase family. Requires Mn(2+) as cofactor.

The protein resides in the cytoplasm. The catalysed reaction is L-fucose = L-fuculose. The protein operates within carbohydrate degradation; L-fucose degradation; L-lactaldehyde and glycerone phosphate from L-fucose: step 1/3. Functionally, converts the aldose L-fucose into the corresponding ketose L-fuculose. This chain is L-fucose isomerase, found in Bacteroides thetaiotaomicron (strain ATCC 29148 / DSM 2079 / JCM 5827 / CCUG 10774 / NCTC 10582 / VPI-5482 / E50).